A 132-amino-acid polypeptide reads, in one-letter code: Phosphoribosyl-AMP cyclohydrolase (132 aa).

Mg(2+) is bound at residue D85. C86 is a Zn(2+) binding site. Mg(2+) contacts are provided by D87 and D89. 2 residues coordinate Zn(2+): C102 and C109.

It belongs to the PRA-CH family. In terms of assembly, homodimer. Requires Mg(2+) as cofactor. Zn(2+) is required as a cofactor.

It is found in the cytoplasm. The enzyme catalyses 1-(5-phospho-beta-D-ribosyl)-5'-AMP + H2O = 1-(5-phospho-beta-D-ribosyl)-5-[(5-phospho-beta-D-ribosylamino)methylideneamino]imidazole-4-carboxamide. The protein operates within amino-acid biosynthesis; L-histidine biosynthesis; L-histidine from 5-phospho-alpha-D-ribose 1-diphosphate: step 3/9. Functionally, catalyzes the hydrolysis of the adenine ring of phosphoribosyl-AMP. This Frankia alni (strain DSM 45986 / CECT 9034 / ACN14a) protein is Phosphoribosyl-AMP cyclohydrolase.